The primary structure comprises 115 residues: uncharacterized protein (115 aa).

The next 3 membrane-spanning stretches (helical) occupy residues 7–27, 40–60, and 72–92; these read TLIF…IWFD, YALT…LLAA, and IVLV…YFYL.

The protein localises to the cell membrane. This is an uncharacterized protein from Haemophilus influenzae (strain ATCC 51907 / DSM 11121 / KW20 / Rd).